Consider the following 646-residue polypeptide: Lipoteichoic acid synthase (646 aa).

Residues M1–K7 lie on the Cytoplasmic side of the membrane. The helical transmembrane segment at I8–S28 threads the bilayer. Over Y29–N43 the chain is Extracellular. The chain crosses the membrane as a helical span at residues L44 to F64. The Cytoplasmic portion of the chain corresponds to K65–K68. Residues A69–V89 traverse the membrane as a helical segment. Over Y90–S119 the chain is Extracellular. A helical transmembrane segment spans residues F120–F140. Over K141–K153 the chain is Cytoplasmic. A helical transmembrane segment spans residues F154 to E174. Topologically, residues T175–K646 are extracellular. Mn(2+) is bound by residues E255 and T300. T300 is a catalytic residue. Substrate is bound at residue H416. Mn(2+)-binding residues include D475 and H476.

It belongs to the LTA synthase family. Proteolytically cleaved.

It is found in the cell membrane. It localises to the secreted. It participates in cell wall biogenesis; lipoteichoic acid biosynthesis. Catalyzes the polymerization of lipoteichoic acid (LTA) polyglycerol phosphate, a reaction that presumably uses phosphatidylglycerol (PG) as substrate. Is required for staphylococcal growth and cell division process. In Staphylococcus epidermidis (strain ATCC 35984 / DSM 28319 / BCRC 17069 / CCUG 31568 / BM 3577 / RP62A), this protein is Lipoteichoic acid synthase (ltaS).